The chain runs to 335 residues: Probable cytosolic iron-sulfur protein assembly protein Ciao1 (335 aa).

7 WD repeats span residues 12 to 51 (GHKG…WSTK), 57 to 96 (GHKR…FECN), 101 to 140 (GHEN…EFEC), 146 to 185 (PHTQ…NDWD), 192 to 231 (SHTS…NTAG), 250 to 289 (QHSR…KPDE), and 301 to 335 (AHDQ…KVTE).

It belongs to the WD repeat CIA1 family. In terms of processing, conjugated to URM1, a ubiquitin-like protein.

In terms of biological role, essential component of the cytosolic iron-sulfur (Fe/S) protein assembly machinery. Required for the maturation of extramitochondrial Fe/S proteins. This is Probable cytosolic iron-sulfur protein assembly protein Ciao1 from Drosophila melanogaster (Fruit fly).